Consider the following 183-residue polypeptide: MSKKIMATQKVIIASLNPAKITAVESAFTSAFPDGTFEFVGVNVPSEVADQPMSDSETHLGALNRVRNAKACRADGAFYVGLEAGIDGNVTFAWMVIESHTHRGESRSASLMLPPNVIAKLPNANELGDVMDEVFGTENIKQKGGAISLLTQNQLTRSSVYHQALILALIPFTNPEHFPANLS.

Position 75 (aspartate 75) interacts with Mg(2+). Substrate is bound at residue 75-76; that stretch reads DG.

This sequence belongs to the YjjX NTPase family. Homodimer. The cofactor is Mg(2+). It depends on Mn(2+) as a cofactor.

The catalysed reaction is XTP + H2O = XDP + phosphate + H(+). It catalyses the reaction ITP + H2O = IDP + phosphate + H(+). In terms of biological role, phosphatase that hydrolyzes non-canonical purine nucleotides such as XTP and ITP to their respective diphosphate derivatives. Probably excludes non-canonical purines from DNA/RNA precursor pool, thus preventing their incorporation into DNA/RNA and avoiding chromosomal lesions. The polypeptide is Inosine/xanthosine triphosphatase (Vibrio vulnificus (strain YJ016)).